Here is a 413-residue protein sequence, read N- to C-terminus: SWIRM domain-containing protein FUN19 (413 aa).

A compositionally biased stretch (low complexity) spans 35-51; that stretch reads KASNNNNDSNKNGLNMS. Disordered stretches follow at residues 35–55, 189–211, and 249–271; these read KASNNNNDSNKNGLNMSDYSN, YNDDMTPPPLPSSSSRLPSPLAS, and YSPQRRTMTTSPHRAKKFSPSAS. The residue at position 194 (T194) is a Phosphothreonine. A compositionally biased stretch (low complexity) spans 200–211; the sequence is SSSSRLPSPLAS. Phosphoserine is present on residues S207 and S211. Residues 316–413 form the SWIRM domain; the sequence is LKIEWKGSPM…LQDSNFTKYL (98 aa).

This Saccharomyces cerevisiae (strain ATCC 204508 / S288c) (Baker's yeast) protein is SWIRM domain-containing protein FUN19 (FUN19).